Consider the following 730-residue polypeptide: Trimethylamine dehydrogenase (730 aa).

FMN-binding residues include Pro29, Cys31, Tyr61, and Glu104. S-6-FMN cysteine is present on Cys31. 170-173 is a substrate binding site; the sequence is YGAH. Catalysis depends on Tyr175, which acts as the Proton donor. Positions 223, 268, 300, 322, and 323 each coordinate FMN. [4Fe-4S] cluster is bound by residues Cys346, Cys349, Cys352, and Cys365. Positions 401, 420, 421, 428, 471, and 675 each coordinate ADP.

It in the N-terminal section; belongs to the NADH:flavin oxidoreductase/NADH oxidase family. In terms of assembly, homodimer. Forms a ternary complex with the heterodimeric electron transfer flavoprotein. FMN is required as a cofactor. It depends on [4Fe-4S] cluster as a cofactor.

It catalyses the reaction trimethylamine + oxidized [electron-transfer flavoprotein] + H2O + H(+) = dimethylamine + reduced [electron-transfer flavoprotein] + formaldehyde. This is Trimethylamine dehydrogenase from Methylophilus methylotrophus (Bacterium W3A1).